Consider the following 417-residue polypeptide: 4-hydroxy-3-methylbut-2-en-1-yl diphosphate synthase (flavodoxin) (417 aa).

[4Fe-4S] cluster-binding residues include Cys307, Cys310, Cys353, and Glu360.

It belongs to the IspG family. The cofactor is [4Fe-4S] cluster.

It carries out the reaction (2E)-4-hydroxy-3-methylbut-2-enyl diphosphate + oxidized [flavodoxin] + H2O + 2 H(+) = 2-C-methyl-D-erythritol 2,4-cyclic diphosphate + reduced [flavodoxin]. Its pathway is isoprenoid biosynthesis; isopentenyl diphosphate biosynthesis via DXP pathway; isopentenyl diphosphate from 1-deoxy-D-xylulose 5-phosphate: step 5/6. Converts 2C-methyl-D-erythritol 2,4-cyclodiphosphate (ME-2,4cPP) into 1-hydroxy-2-methyl-2-(E)-butenyl 4-diphosphate. The polypeptide is 4-hydroxy-3-methylbut-2-en-1-yl diphosphate synthase (flavodoxin) (Xylella fastidiosa (strain 9a5c)).